The following is a 182-amino-acid chain: WUSCHEL-related homeobox 5 (182 aa).

Residues 1–24 (MSFSVKGRSLRGNNNGGTGTKCGR) are disordered. Residues 20–84 (TKCGRWNPTV…NHKARERQKR (65 aa)) constitute a DNA-binding region (homeobox; WUS-type).

It belongs to the WUS homeobox family. As to expression, specifically expressed in the central cells of a quiescent center (QC) of the root.

It localises to the nucleus. In terms of biological role, transcription factor, which may be involved in the specification and maintenance of the stem cells (QC cells) in the root apical meristem (RAM). This is WUSCHEL-related homeobox 5 (WOX5) from Arabidopsis thaliana (Mouse-ear cress).